Here is a 1304-residue protein sequence, read N- to C-terminus: Probable inactive serine/threonine-protein kinase fnkC (1304 aa).

Residues 33 to 402 (FEIIRILKKD…TNLLLTHKFI (370 aa)) form the Protein kinase domain. ATP contacts are provided by residues 39–47 (LKKDEFSTT) and lysine 68. Residues 208–277 (KDNNNNNNNN…EAEGGGGGGE (70 aa)) are disordered. Over residues 210–269 (NNNNNNNNNNNNNNNNNNNNNNNNNNNNNNANNSNNNTLNNLSIVNNNSSSSSNDNSSEA) the composition is skewed to low complexity. FNIP repeat units lie at residues 514-556 (HSKS…LGSD), 710-753 (FNQL…FGRC), 754-797 (FNQP…FGSQ), 798-841 (YNQP…FGES), and 900-943 (YNDI…FGCD). MATH domains lie at 1025–1154 (QGSW…RIDA) and 1172–1291 (NQAF…NVSI).

It belongs to the protein kinase superfamily. STE Ser/Thr protein kinase family.

This is Probable inactive serine/threonine-protein kinase fnkC (fnkC) from Dictyostelium discoideum (Social amoeba).